Reading from the N-terminus, the 289-residue chain is MYG1 protein CT_386 (289 aa).

Belongs to the MYG1 family.

This is MYG1 protein CT_386 from Chlamydia trachomatis serovar D (strain ATCC VR-885 / DSM 19411 / UW-3/Cx).